A 764-amino-acid polypeptide reads, in one-letter code: Thyrotropin receptor (764 aa).

Positions 1-20 (MRPADLLQLVLLLDLPRDLG) are cleaved as a signal peptide. Residues 21-413 (GMGCSSPPCE…EFNPCEDIMG (393 aa)) are Extracellular-facing. A disulfide bridge connects residues cysteine 31 and cysteine 41. Residues asparagine 77, asparagine 99, and asparagine 113 are each glycosylated (N-linked (GlcNAc...) asparagine). 7 LRR repeats span residues 100–124 (LSKVTHIEIRNTRNLTYIDPDALKE), 125–150 (LPLLKFLGIFNTGLKMFPDLTKVYST), 152–174 (IFFILEITDNPYMTSIPVNAFQG), 176–199 (CNETLTLKLYNNGFTSVQGYAFNG), 200–223 (TKLDAVYLNKNKYLTVIDKDAFGG), 227–248 (GPSLLDVSQTSVTALPSKGLEH), and 250–271 (KELIARNTWTLKKLPLSLSFLH). Asparagine 177 and asparagine 198 each carry an N-linked (GlcNAc...) asparagine glycan. Asparagine 302 carries N-linked (GlcNAc...) asparagine glycosylation. Position 385 is a sulfotyrosine (tyrosine 385). Residues 414–441 (YKFLRIVVWFVSLLALLGNVFVLLILLT) traverse the membrane as a helical segment. The Cytoplasmic portion of the chain corresponds to 442 to 450 (SHYKLNVPR). A helical membrane pass occupies residues 451-473 (FLMCNLAFADFCMGMYLLLIASV). The Extracellular segment spans residues 474–494 (DLYTHSEYYNHAIDWQTGPGC). A disulfide bridge links cysteine 494 with cysteine 569. Residues 495–517 (NTAGFFTVFASELSVYTLTVITL) traverse the membrane as a helical segment. At 518–537 (ERWYAITFAMRLDRKIRLRH) the chain is on the cytoplasmic side. The chain crosses the membrane as a helical span at residues 538-560 (ACAIMVGGWVCCFLLALLPLVGI). Over 561 to 580 (SSYAKVSICLPMDTETPLAL) the chain is Extracellular. Residues 581–602 (AYIVFVLTLNIVAFVIVCCCYV) traverse the membrane as a helical segment. Over 603–625 (KIYITVRNPQYNPGDKDTKIAKR) the chain is Cytoplasmic. A helical transmembrane segment spans residues 626 to 649 (MAVLIFTDFICMAPISFYALSAIL). The Extracellular portion of the chain corresponds to 650-660 (NKPLITVSNSK). A helical membrane pass occupies residues 661–682 (ILLVLFYPLNSCANPFLYAIFT). The Cytoplasmic segment spans residues 683-764 (KAFQRDVFIL…ISEEYMQTVL (82 aa)). Residues 762–764 (TVL) carry the PDZ-binding motif.

Belongs to the G-protein coupled receptor 1 family. FSH/LSH/TSH subfamily. In terms of assembly, interacts with heterodimer GPHA2:GPHB5; this interaction stimulates cAMP production. Interacts (via the PDZ-binding motif) with SCRIB; regulates TSHR trafficking and function. In terms of processing, glycosylated. Sulfated. Sulfation on Tyr-385 plays a role in thyrotropin receptor binding and activation. Expressed in thyroide cells (at protein level). Expressed in the thyroid.

Its subcellular location is the cell membrane. The protein localises to the basolateral cell membrane. In terms of biological role, receptor for the thyroid-stimulating hormone (TSH) or thyrotropin. Also acts as a receptor for the heterodimeric glycoprotein hormone (GPHA2:GPHB5) or thyrostimulin. The activity of this receptor is mediated by G proteins which activate adenylate cyclase. Plays a central role in controlling thyroid cell metabolism. The polypeptide is Thyrotropin receptor (TSHR) (Homo sapiens (Human)).